Consider the following 346-residue polypeptide: Biotin synthase (346 aa).

The Radical SAM core domain occupies 38 to 256 (RQVQVSTLLS…IAVARIMMPT (219 aa)). The [4Fe-4S] cluster site is built by C53, C57, and C60. The [2Fe-2S] cluster site is built by C97, C128, C188, and R260.

The protein belongs to the radical SAM superfamily. Biotin synthase family. As to quaternary structure, homodimer. [4Fe-4S] cluster serves as cofactor. Requires [2Fe-2S] cluster as cofactor.

The enzyme catalyses (4R,5S)-dethiobiotin + (sulfur carrier)-SH + 2 reduced [2Fe-2S]-[ferredoxin] + 2 S-adenosyl-L-methionine = (sulfur carrier)-H + biotin + 2 5'-deoxyadenosine + 2 L-methionine + 2 oxidized [2Fe-2S]-[ferredoxin]. Its pathway is cofactor biosynthesis; biotin biosynthesis; biotin from 7,8-diaminononanoate: step 2/2. In terms of biological role, catalyzes the conversion of dethiobiotin (DTB) to biotin by the insertion of a sulfur atom into dethiobiotin via a radical-based mechanism. This Shigella dysenteriae serotype 1 (strain Sd197) protein is Biotin synthase.